Consider the following 53-residue polypeptide: Large ribosomal subunit protein bL33A (53 aa).

Belongs to the bacterial ribosomal protein bL33 family.

The sequence is that of Large ribosomal subunit protein bL33A (rpmG1) from Mycoplasma genitalium (strain ATCC 33530 / DSM 19775 / NCTC 10195 / G37) (Mycoplasmoides genitalium).